Reading from the N-terminus, the 464-residue chain is Fumarate hydratase class II 1 (464 aa).

Substrate is bound by residues 96-98 (SGT), 127-130 (HPND), 137-139 (SSN), and Thr185. The active-site Proton donor/acceptor is His186. Ser316 is a catalytic residue. Substrate-binding positions include Ser317 and 322–324 (KVN).

This sequence belongs to the class-II fumarase/aspartase family. Fumarase subfamily. In terms of assembly, homotetramer.

The protein localises to the cytoplasm. It catalyses the reaction (S)-malate = fumarate + H2O. Its pathway is carbohydrate metabolism; tricarboxylic acid cycle; (S)-malate from fumarate: step 1/1. In terms of biological role, involved in the TCA cycle. Catalyzes the stereospecific interconversion of fumarate to L-malate. The sequence is that of Fumarate hydratase class II 1 from Pseudomonas aeruginosa (strain ATCC 15692 / DSM 22644 / CIP 104116 / JCM 14847 / LMG 12228 / 1C / PRS 101 / PAO1).